We begin with the raw amino-acid sequence, 442 residues long: Probable glycine dehydrogenase (decarboxylating) subunit 1 (442 aa).

Belongs to the GcvP family. N-terminal subunit subfamily. As to quaternary structure, the glycine cleavage system is composed of four proteins: P, T, L and H. In this organism, the P 'protein' is a heterodimer of two subunits.

The catalysed reaction is N(6)-[(R)-lipoyl]-L-lysyl-[glycine-cleavage complex H protein] + glycine + H(+) = N(6)-[(R)-S(8)-aminomethyldihydrolipoyl]-L-lysyl-[glycine-cleavage complex H protein] + CO2. In terms of biological role, the glycine cleavage system catalyzes the degradation of glycine. The P protein binds the alpha-amino group of glycine through its pyridoxal phosphate cofactor; CO(2) is released and the remaining methylamine moiety is then transferred to the lipoamide cofactor of the H protein. The chain is Probable glycine dehydrogenase (decarboxylating) subunit 1 from Phenylobacterium zucineum (strain HLK1).